Reading from the N-terminus, the 90-residue chain is Neuropeptide-like 3 (90 aa).

The N-terminal stretch at 1-16 is a signal peptide; the sequence is MFKLCVFVALLSLAAA. 2 consecutive propeptides follow at residues 17 to 54 and 67 to 79; these read APAP…LAPQ and AITQ…LLIK. Isoleucine amide is present on Ile89.

Its subcellular location is the secreted. This is Neuropeptide-like 3 (Nplp3) from Drosophila melanogaster (Fruit fly).